Reading from the N-terminus, the 1576-residue chain is Protein Shroom (1576 aa).

7 disordered regions span residues 1–31 (MKMRNHKENGNGSEMGESTKSLAKMEPENNN), 46–100 (SNGA…TQAG), 112–142 (YDQTAFHHQKQPSYAQSEGYHSYVSSSDSTS), 187–244 (RQSH…SSTE), 267–434 (ISES…ISVT), 589–609 (VERQQQQQKEEQQLLRPHSQS), and 621–660 (PNNLSPIMVGLPTGSNSASTRDCSSPTPPPPPRRSGSLLP). Residues 10–21 (GNGSEMGESTKS) show a composition bias toward polar residues. Low complexity-rich tracts occupy residues 46–69 (SNGANSRSSNSNASFSSASVAGSV), 76–91 (HNSSSSQLGQQHGSSL), and 128–142 (SEGYHSYVSSSDSTS). Residues 189–211 (SHSHSHSHAHSHSNSHGHSHGHA) are compositionally biased toward basic residues. Low complexity-rich tracts occupy residues 212 to 244 (HSASSSSSSNNNSNGSATNNNNNNSSESTSSTE) and 267 to 283 (ISESVSSSQRIVHSSRV). The segment covering 305 to 317 (DSSPTASNSSQMM) has biased composition (polar residues). Low complexity predominate over residues 376-388 (QSTLSTQSSLLEL). Positions 399–415 (MGQSHSMGDLQQKNPHQ) are enriched in polar residues. Position 404 is a phosphoserine (S404). Positions 445 to 920 (APQPPAGKPS…LESNQQKRSN (476 aa)) are F-actin binding region required for planar polarity and cortical localization. Residues 633–643 (TGSNSASTRDC) are compositionally biased toward polar residues. S667 and S668 each carry phosphoserine. Disordered regions lie at residues 699-728 (ISFNDCGMPPPPPPPRGRLAVPTRRTSSAT), 743-823 (AALA…NCFA), 849-876 (VPKKPTSLQHKHLANGGGGSRKRPHHAT), 910-939 (NLESNQQKRSNSKASYLPRQSLEKLNNTDP), 1036-1055 (GYGKSSKPVTPQQYTRSQSY), 1091-1116 (PTATPTPTPTPTPTPPRLSPASSHSD), and 1210-1244 (SFANEPLMTPPLPPSPPPPLEPEEEEEQEENDVHD). Basic residues predominate over residues 748-759 (QQHHPQQHRHAQ). Residues 798-816 (PLPPPPPPEVLQPRPPPSP) are compositionally biased toward pro residues. 2 stretches are compositionally biased toward polar residues: residues 910–923 (NLESNQQKRSNSKA) and 1042–1055 (KPVTPQQYTRSQSY). 2 stretches are compositionally biased toward pro residues: residues 1094 to 1108 (TPTPTPTPTPTPPRL) and 1217 to 1229 (MTPPLPPSPPPPL). Over residues 1230–1239 (EPEEEEEQEE) the composition is skewed to acidic residues. Residues 1232-1296 (EEEEEQEEND…LEAAREEHQT (65 aa)) adopt a coiled-coil conformation. The ASD2 domain occupies 1305–1572 (RQPIELDYEQ…QLSSLSDALV (268 aa)).

The protein belongs to the shroom family. As to quaternary structure, monomer or homodimer. Interacts with Rok. In terms of assembly, binds (via N-terminus) to F-actin.

The protein localises to the cell junction. It localises to the adherens junction. Its subcellular location is the cytoplasm. The protein resides in the cytoskeleton. It is found in the apical cell membrane. Binds to Rho-kinase Rok and targets it to the apical cell cortex where it mediates apical constriction. During embryogenic axis elongation, required for the localization to adherens junctions and the establishment of planar polarization of both Rho-kinase Rok and myosin regulatory light chain sqh. May be involved in the assembly of microtubule arrays during cell elongation. The sequence is that of Protein Shroom from Drosophila melanogaster (Fruit fly).